Consider the following 96-residue polypeptide: (4S)-4-hydroxy-5-phosphonooxypentane-2,3-dione isomerase (96 aa).

The 90-residue stretch at 2–91 folds into the ABM domain; sequence HVTLVEINVK…MTGPRKKTTF (90 aa).

The protein belongs to the LsrG family. In terms of assembly, homodimer.

The protein resides in the cytoplasm. The enzyme catalyses (2S)-2-hydroxy-3,4-dioxopentyl phosphate = 3-hydroxy-2,4-dioxopentyl phosphate. Its function is as follows. Involved in the degradation of phospho-AI-2, thereby terminating induction of the lsr operon and closing the AI-2 signaling cycle. Catalyzes the conversion of (4S)-4-hydroxy-5-phosphonooxypentane-2,3-dione (P-DPD) to 3-hydroxy-5-phosphonooxypentane-2,4-dione (P-HPD). The protein is (4S)-4-hydroxy-5-phosphonooxypentane-2,3-dione isomerase of Yersinia enterocolitica serotype O:8 / biotype 1B (strain NCTC 13174 / 8081).